A 229-amino-acid chain; its full sequence is Secretory carrier-associated membrane protein 4 (229 aa).

Topologically, residues 1–39 (MSEKENNFPPLPKFIPVKPCFYQNFSDEIPVEHQVLVKR) are cytoplasmic. Helical transmembrane passes span 40–60 (IYRLWMFYCATLGVNLIACLA), 61–81 (WWIGGGSGTNFGLAFVWLLLF), 105–125 (FMAFFFIFGAQFVLTVIQAIG), and 149–169 (VVMLLPAIMFSVSAAMMAIAI). Over 170–229 (MKVHRIYRGAGGSFQKAQTEWNTGTWRNPPSREAQYNNFSGNSLPEYPTVPSYPGSGQWP) the chain is Cytoplasmic. T194 is subject to Phosphothreonine. Residues 208–229 (FSGNSLPEYPTVPSYPGSGQWP) form a disordered region.

The protein belongs to the SCAMP family.

It localises to the membrane. Probably involved in membrane protein trafficking. This is Secretory carrier-associated membrane protein 4 (SCAMP4) from Homo sapiens (Human).